The sequence spans 391 residues: Ferrochelatase (391 aa).

The Fe cation site is built by His-196 and Glu-281.

It belongs to the ferrochelatase family.

The protein localises to the cytoplasm. It catalyses the reaction heme b + 2 H(+) = protoporphyrin IX + Fe(2+). Its pathway is porphyrin-containing compound metabolism; protoheme biosynthesis; protoheme from protoporphyrin-IX: step 1/1. Catalyzes the ferrous insertion into protoporphyrin IX. This chain is Ferrochelatase, found in Prochlorococcus marinus (strain SARG / CCMP1375 / SS120).